The primary structure comprises 175 residues: Isopentenyl-diphosphate Delta-isomerase (175 aa).

The Mn(2+) site is built by histidine 22 and histidine 29. The 134-residue stretch at 27–160 (KLHRAFSVLL…PAAYTPWLAE (134 aa)) folds into the Nudix hydrolase domain. Cysteine 64 is an active-site residue. Cysteine 64 serves as a coordination point for Mg(2+). Histidine 66 lines the Mn(2+) pocket. Glutamate 84 is a Mg(2+) binding site. Residues glutamate 110 and glutamate 112 each coordinate Mn(2+). Glutamate 112 is a catalytic residue.

It belongs to the IPP isomerase type 1 family. The cofactor is Mg(2+). Requires Mn(2+) as cofactor.

Its subcellular location is the cytoplasm. It catalyses the reaction isopentenyl diphosphate = dimethylallyl diphosphate. Its pathway is isoprenoid biosynthesis; dimethylallyl diphosphate biosynthesis; dimethylallyl diphosphate from isopentenyl diphosphate: step 1/1. Its function is as follows. Catalyzes the 1,3-allylic rearrangement of the homoallylic substrate isopentenyl (IPP) to its highly electrophilic allylic isomer, dimethylallyl diphosphate (DMAPP). In Nocardia farcinica (strain IFM 10152), this protein is Isopentenyl-diphosphate Delta-isomerase.